A 290-amino-acid polypeptide reads, in one-letter code: GTPase Era (290 aa).

The Era-type G domain maps to 2–169 (KSGFAAILGR…KNKIYENFSE (168 aa)). Residues 10 to 17 (GRPSTGKS) form a G1 region. Residue 10 to 17 (GRPSTGKS) coordinates GTP. The segment at 36–40 (QTTRN) is G2. The G3 stretch occupies residues 57 to 60 (DTPG). Residues 57–61 (DTPGF) and 119–122 (NKVD) each bind GTP. The segment at 119-122 (NKVD) is G4. Positions 148 to 150 (ISA) are G5. The region spanning 200–276 (LKEELPYSLY…NLFLQVKLKK (77 aa)) is the KH type-2 domain.

The protein belongs to the TRAFAC class TrmE-Era-EngA-EngB-Septin-like GTPase superfamily. Era GTPase family. Monomer.

It is found in the cytoplasm. Its subcellular location is the cell inner membrane. Its function is as follows. An essential GTPase that binds both GDP and GTP, with rapid nucleotide exchange. Plays a role in 16S rRNA processing and 30S ribosomal subunit biogenesis and possibly also in cell cycle regulation and energy metabolism. In Borreliella afzelii (strain PKo) (Borrelia afzelii), this protein is GTPase Era.